The chain runs to 1714 residues: Protein ESSENTIAL FOR POTEXVIRUS ACCUMULATION 1 (1714 aa).

Disordered regions lie at residues 1–296 (MANS…PPHL) and 358–511 (IVSS…SKGE). At S39 the chain carries Phosphoserine. Residues 58–75 (DPNQYGNHSDVVRTTGNG) are compositionally biased toward polar residues. Basic and acidic residues-rich tracts occupy residues 96-136 (ESGR…DRWD) and 143-203 (GEQR…REKG). 2 stretches are compositionally biased toward polar residues: residues 230–244 (HNQS…SFSH) and 268–278 (IFTSAPNQSHP). Basic and acidic residues-rich tracts occupy residues 389–422 (GSRE…EASH) and 430–441 (RGNEAPVRELKE). The segment covering 444 to 463 (MQGNAHVQSASPWRQSSGGE) has biased composition (polar residues). Over residues 464–483 (RSNRNSHDWNDPSADSRLKS) the composition is skewed to basic and acidic residues. The GYF domain maps to 546 to 597 (ELSLYYKDPQGLIQGPFSGSDIIGWFEAGYFGIDLLVRLASAPNDSPFSLLG). 3 disordered regions span residues 728–753 (ESAN…PSSD), 1092–1205 (VKNN…KPAP), and 1437–1566 (QEKM…GKKE). A compositionally biased stretch (polar residues) spans 737-753 (ENVSENAQQPTRSPSSD). Over residues 1142-1162 (SEIKGKTKKSADTLIDNDTHL) the composition is skewed to basic and acidic residues. Residues 1163–1180 (IKSSTATASNTSQMSSEV) are compositionally biased toward polar residues. Residues 1467-1488 (ASWSRSASSPSQAVSQSSSQSK) show a composition bias toward low complexity. Positions 1515–1544 (LTSQNSWGTKNTPGKVNAGTSLNRQKSVSM) are enriched in polar residues.

As to quaternary structure, associates with eIF4E initiation factors and the ribosome complex, thus likely contributing to the proper translation of target proteins. Interacts directly with RPL18B and eIF4E1. Binds to SMG7. In terms of processing, quickly phosphorylated at Ser-39 after treatment of seedlings with the pathogen-associated molecular pattern (PAMP) flg22. Expressed in all tissues, mostly in flowers, leaves and stems, and, to a lower extent, in roots (at protein level).

It is found in the cytoplasm. The protein localises to the cytosol. Its subcellular location is the P-body. Translational repressor involved in the negative regulation of immune receptor accumulation via the inhibition of nucleotide-binding leucine-rich repeat (NLR) receptor mediated defense. Represses NLR protein accumulation (e.g. SNC1, RPS4, RPM1 and RPS2). Together with SMG7, helps to restrict effector-triggered immunity (ETI) cell death induction during pathogen infection in a salicylic acid- (SA) and reactive oxygen species- (ROS) independent manner. Required for pathogen-associated molecular pattern (PAMP)-induced suppression of necrotrophic fungal (e.g. F.moniliforme) pathogen-derived mycotoxin-triggered (e.g. fumonisin B1) cell death. Functionally, (Microbial infection) Required for early steps of plantago asiatica mosaic virus (PlAMV, genus Potexvirus) infection. Facilitates pathogenic growth of avirulent hemi-biotrophic bacteria P.syringae pv. tomato (Pst) DC3000 (e.g. AvrRps4 and AvrRpm1) and of the compatible oomycete H.arabidopsidis Noco2. This chain is Protein ESSENTIAL FOR POTEXVIRUS ACCUMULATION 1, found in Arabidopsis thaliana (Mouse-ear cress).